The chain runs to 426 residues: Serine--tRNA ligase (426 aa).

L-serine is bound at residue 233–235 (TAE). 264-266 (RSE) serves as a coordination point for ATP. Residue glutamate 287 coordinates L-serine. 351–354 (EISS) serves as a coordination point for ATP. Serine 387 is a binding site for L-serine.

Belongs to the class-II aminoacyl-tRNA synthetase family. Type-1 seryl-tRNA synthetase subfamily. As to quaternary structure, homodimer. The tRNA molecule binds across the dimer.

The protein localises to the cytoplasm. The catalysed reaction is tRNA(Ser) + L-serine + ATP = L-seryl-tRNA(Ser) + AMP + diphosphate + H(+). It carries out the reaction tRNA(Sec) + L-serine + ATP = L-seryl-tRNA(Sec) + AMP + diphosphate + H(+). The protein operates within aminoacyl-tRNA biosynthesis; selenocysteinyl-tRNA(Sec) biosynthesis; L-seryl-tRNA(Sec) from L-serine and tRNA(Sec): step 1/1. Its function is as follows. Catalyzes the attachment of serine to tRNA(Ser). Is also able to aminoacylate tRNA(Sec) with serine, to form the misacylated tRNA L-seryl-tRNA(Sec), which will be further converted into selenocysteinyl-tRNA(Sec). The polypeptide is Serine--tRNA ligase (Ectopseudomonas mendocina (strain ymp) (Pseudomonas mendocina)).